The following is a 129-amino-acid chain: D-ribose pyranase (129 aa).

The active-site Proton donor is histidine 20. Substrate is bound by residues aspartate 28, histidine 96, and 118-120; that span reads YAN.

This sequence belongs to the RbsD / FucU family. RbsD subfamily. As to quaternary structure, homodecamer.

The protein resides in the cytoplasm. The enzyme catalyses beta-D-ribopyranose = beta-D-ribofuranose. The protein operates within carbohydrate metabolism; D-ribose degradation; D-ribose 5-phosphate from beta-D-ribopyranose: step 1/2. In terms of biological role, catalyzes the interconversion of beta-pyran and beta-furan forms of D-ribose. In Shouchella clausii (strain KSM-K16) (Alkalihalobacillus clausii), this protein is D-ribose pyranase.